Reading from the N-terminus, the 445-residue chain is Neuropeptide Y receptor type 5 (445 aa).

Residues 1–42 (MDLELDEYYNKTLATENNTAATRNSDFPVWDDYKSSVDDLQY) lie on the Extracellular side of the membrane. 2 N-linked (GlcNAc...) asparagine glycosylation sites follow: Asn-10 and Asn-17. A helical membrane pass occupies residues 43 to 63 (FLIGLYTFVSLLGFMGNLLIL). At 64 to 77 (MALMKKRNQKTTVN) the chain is on the cytoplasmic side. A helical membrane pass occupies residues 78-98 (FLIGNLAFSDILVVLFCSPFT). The Extracellular segment spans residues 99 to 117 (LTSVLLDQWMFGKVMCHIM). An intrachain disulfide couples Cys-114 to Cys-198. Residues 118-138 (PFLQCVSVLVSTLILISIAIV) traverse the membrane as a helical segment. Over 139 to 156 (RYHMIKHPISNNLTANHG) the chain is Cytoplasmic. The helical transmembrane segment at 157–177 (YFLIATVWTLGFAICSPLPVF) threads the bilayer. The Extracellular portion of the chain corresponds to 178–208 (HSLVELQETFGSALLSSRYLCVESWPSDSYR). The helical transmembrane segment at 209–229 (IAFTISLLLVQYILPLVCLTV) threads the bilayer. Residues 230-369 (SHTSVCRSIS…KKRSRSVFYR (140 aa)) are Cytoplasmic-facing. A helical transmembrane segment spans residues 370–390 (LTILILVFAVSWMPLHLFHVV). Residues 391 to 407 (TDFNDNLISNRHFKLVY) lie on the Extracellular side of the membrane. The helical transmembrane segment at 408–428 (CICHLLGMMSCCLNPILYGFL) threads the bilayer. The Cytoplasmic segment spans residues 429–445 (NNGIKADLVSLIHCLHM). Cys-442 is lipidated: S-palmitoyl cysteine.

It belongs to the G-protein coupled receptor 1 family. As to expression, brain; hypothalamus.

It is found in the cell membrane. Receptor for neuropeptide Y and peptide YY. The activity of this receptor is mediated by G proteins that inhibit adenylate cyclase activity. Seems to be associated with food intake. Could be involved in feeding disorders. This chain is Neuropeptide Y receptor type 5 (NPY5R), found in Homo sapiens (Human).